The following is a 126-amino-acid chain: Histone H2B type 1-H (126 aa).

A compositionally biased stretch (low complexity) spans 1-12; it reads MPEPAKSAPAPK. The tract at residues 1-36 is disordered; that stretch reads MPEPAKSAPAPKKGSKKALTKAQKKDGKKRKRSRKE. Residue P2 is modified to N-acetylproline. E3 carries the post-translational modification ADP-ribosyl glutamic acid. K6 is modified (N6-(2-hydroxyisobutyryl)lysine; alternate). K6 carries the post-translational modification N6-(beta-hydroxybutyryl)lysine; alternate. K6 carries the post-translational modification N6-acetyllysine; alternate. K6 carries the N6-butyryllysine; alternate modification. K6 is modified (N6-crotonyllysine; alternate). Residue K6 is modified to N6-lactoyllysine; alternate. K6 participates in a covalent cross-link: Glycyl lysine isopeptide (Lys-Gly) (interchain with G-Cter in SUMO2); alternate. S7 is subject to ADP-ribosylserine. N6-(beta-hydroxybutyryl)lysine; alternate is present on K12. An N6-acetyllysine; alternate mark is found at K12 and K13. N6-crotonyllysine; alternate is present on residues K12 and K13. N6-lactoyllysine; alternate is present on K12. Residue K13 is modified to N6-(2-hydroxyisobutyryl)lysine; alternate. Position 15 is a phosphoserine; by STK4/MST1 (S15). N6-acetyllysine; alternate occurs at positions 16, 17, 21, and 24. N6-crotonyllysine; alternate is present on residues K16, K17, K21, and K24. K16, K17, K21, and K24 each carry N6-lactoyllysine; alternate. K17 carries the post-translational modification N6-glutaryllysine; alternate. An N6-(2-hydroxyisobutyryl)lysine; alternate mark is found at K21 and K24. Residue K21 is modified to N6-(beta-hydroxybutyryl)lysine; alternate. An N6-butyryllysine; alternate modification is found at K21. A Glycyl lysine isopeptide (Lys-Gly) (interchain with G-Cter in SUMO2); alternate cross-link involves residue K21. K25 bears the N6-(2-hydroxyisobutyryl)lysine mark. Position 35 is an N6-(2-hydroxyisobutyryl)lysine; alternate (K35). An N6-(beta-hydroxybutyryl)lysine; alternate modification is found at K35. K35 is modified (N6-crotonyllysine; alternate). Residue K35 is modified to N6-glutaryllysine; alternate. An N6-succinyllysine; alternate modification is found at K35. Residue K35 forms a Glycyl lysine isopeptide (Lys-Gly) (interchain with G-Cter in ubiquitin); alternate linkage. E36 bears the PolyADP-ribosyl glutamic acid mark. Position 37 is a phosphoserine; by AMPK (S37). 3 positions are modified to N6-(2-hydroxyisobutyryl)lysine; alternate: K44, K47, and K58. K44 is subject to N6-lactoyllysine; alternate. N6-glutaryllysine; alternate is present on residues K44 and K47. K47 carries the N6-methyllysine; alternate modification. K58 carries the N6,N6-dimethyllysine; alternate modification. R80 is modified (dimethylated arginine). At K86 the chain carries N6-(2-hydroxyisobutyryl)lysine; alternate. An N6-acetyllysine; alternate modification is found at K86. An N6-lactoyllysine; alternate modification is found at K86. Position 86 is an N6,N6,N6-trimethyllysine; alternate (K86). Omega-N-methylarginine occurs at positions 87 and 93. K109 carries the post-translational modification N6-(2-hydroxyisobutyryl)lysine; alternate. K109 bears the N6-(beta-hydroxybutyryl)lysine; alternate mark. K109 is subject to N6-lactoyllysine; alternate. Residue K109 is modified to N6-glutaryllysine; alternate. K109 is subject to N6-methyllysine; alternate. A glycan (O-linked (GlcNAc) serine) is linked at S113. The residue at position 116 (T116) is a Phosphothreonine. K117 and K121 each carry N6-(2-hydroxyisobutyryl)lysine; alternate. The residue at position 117 (K117) is an N6-(beta-hydroxybutyryl)lysine; alternate. Residues K117 and K121 each carry the N6-lactoyllysine; alternate modification. N6-glutaryllysine; alternate is present on residues K117 and K121. K117 and K121 each carry N6-succinyllysine; alternate. Position 117 is an N6-methylated lysine; alternate (K117). K121 participates in a covalent cross-link: Glycyl lysine isopeptide (Lys-Gly) (interchain with G-Cter in ubiquitin); alternate.

The protein belongs to the histone H2B family. In terms of assembly, the nucleosome is a histone octamer containing two molecules each of H2A, H2B, H3 and H4 assembled in one H3-H4 heterotetramer and two H2A-H2B heterodimers. The octamer wraps approximately 147 bp of DNA. Monoubiquitination at Lys-35 (H2BK34Ub) by the MSL1/MSL2 dimer is required for histone H3 'Lys-4' (H3K4me) and 'Lys-79' (H3K79me) methylation and transcription activation at specific gene loci, such as HOXA9 and MEIS1 loci. Similarly, monoubiquitination at Lys-121 (H2BK120Ub) by the RNF20/40 complex gives a specific tag for epigenetic transcriptional activation and is also prerequisite for histone H3 'Lys-4' and 'Lys-79' methylation. It also functions cooperatively with the FACT dimer to stimulate elongation by RNA polymerase II. H2BK120Ub also acts as a regulator of mRNA splicing: deubiquitination by USP49 is required for efficient cotranscriptional splicing of a large set of exons. In terms of processing, phosphorylated on Ser-15 (H2BS14ph) by STK4/MST1 during apoptosis; which facilitates apoptotic chromatin condensation. Also phosphorylated on Ser-15 in response to DNA double strand breaks (DSBs), and in correlation with somatic hypermutation and immunoglobulin class-switch recombination. Phosphorylation at Ser-37 (H2BS36ph) by AMPK in response to stress promotes transcription. Post-translationally, glcNAcylation at Ser-113 promotes monoubiquitination of Lys-121. It fluctuates in response to extracellular glucose, and associates with transcribed genes. ADP-ribosylated by PARP1 or PARP2 on Ser-7 (H2BS6ADPr) in response to DNA damage. H2BS6ADPr promotes recruitment of CHD1L. Mono-ADP-ribosylated on Glu-3 (H2BE2ADPr) by PARP3 in response to single-strand breaks. Poly ADP-ribosylation on Glu-36 (H2BE35ADPr) by PARP1 regulates adipogenesis: it inhibits phosphorylation at Ser-37 (H2BS36ph), thereby blocking expression of pro-adipogenetic genes. In terms of processing, crotonylation (Kcr) is specifically present in male germ cells and marks testis-specific genes in post-meiotic cells, including X-linked genes that escape sex chromosome inactivation in haploid cells. Crotonylation marks active promoters and enhancers and confers resistance to transcriptional repressors. It is also associated with post-meiotically activated genes on autosomes. Post-translationally, hydroxybutyrylation of histones is induced by starvation. Lactylated in macrophages by EP300/P300 by using lactoyl-CoA directly derived from endogenous or exogenous lactate, leading to stimulates gene transcription.

It is found in the nucleus. Its subcellular location is the chromosome. In terms of biological role, core component of nucleosome. Nucleosomes wrap and compact DNA into chromatin, limiting DNA accessibility to the cellular machineries which require DNA as a template. Histones thereby play a central role in transcription regulation, DNA repair, DNA replication and chromosomal stability. DNA accessibility is regulated via a complex set of post-translational modifications of histones, also called histone code, and nucleosome remodeling. This Mus musculus (Mouse) protein is Histone H2B type 1-H.